Here is a 302-residue protein sequence, read N- to C-terminus: N-acetylaspartate synthetase (302 aa).

A compositionally biased stretch (pro residues) spans 46–60 (PGPAAAPPAPPPAPV). The interval 46 to 72 (PGPAAAPPAPPPAPVAQPHGGAGGAGP) is disordered. The helical transmembrane segment at 121 to 141 (YALLAALCFAVSRSLLLTCLV) threads the bilayer. Positions 143 to 283 (AALLGLRYYY…VLPGMTLSLA (141 aa)) constitute an N-acetyltransferase domain.

This sequence belongs to the NAT8 family. In terms of tissue distribution, expressed in brain.

The protein resides in the cytoplasm. The protein localises to the microsome membrane. Its subcellular location is the mitochondrion membrane. It is found in the endoplasmic reticulum membrane. It carries out the reaction L-aspartate + acetyl-CoA = N-acetyl-L-aspartate + CoA + H(+). With respect to regulation, aminooxyacetic acid (AOAA) blocks its activity in both cytoplasm and mitochondria. Functionally, catalyzes the synthesis of N-acetylaspartate acid (NAA) from L-aspartate and acetyl-CoA. Promotes dopamine uptake by regulating TNF-alpha expression. Attenuates methamphetamine-induced inhibition of dopamine uptake. This chain is N-acetylaspartate synthetase, found in Homo sapiens (Human).